The following is a 338-amino-acid chain: Ketol-acid reductoisomerase (NADP(+)) (338 aa).

The region spanning M1–T181 is the KARI N-terminal Rossmann domain. Residues Y24 to Q27, R47, and S52 contribute to the NADP(+) site. H107 is an active-site residue. Position 133 (G133) interacts with NADP(+). Residues N182 to I327 enclose the KARI C-terminal knotted domain. D190, E194, E226, and E230 together coordinate Mg(2+). A substrate-binding site is contributed by S251.

This sequence belongs to the ketol-acid reductoisomerase family. The cofactor is Mg(2+).

The catalysed reaction is (2R)-2,3-dihydroxy-3-methylbutanoate + NADP(+) = (2S)-2-acetolactate + NADPH + H(+). It catalyses the reaction (2R,3R)-2,3-dihydroxy-3-methylpentanoate + NADP(+) = (S)-2-ethyl-2-hydroxy-3-oxobutanoate + NADPH + H(+). It functions in the pathway amino-acid biosynthesis; L-isoleucine biosynthesis; L-isoleucine from 2-oxobutanoate: step 2/4. The protein operates within amino-acid biosynthesis; L-valine biosynthesis; L-valine from pyruvate: step 2/4. Functionally, involved in the biosynthesis of branched-chain amino acids (BCAA). Catalyzes an alkyl-migration followed by a ketol-acid reduction of (S)-2-acetolactate (S2AL) to yield (R)-2,3-dihydroxy-isovalerate. In the isomerase reaction, S2AL is rearranged via a Mg-dependent methyl migration to produce 3-hydroxy-3-methyl-2-ketobutyrate (HMKB). In the reductase reaction, this 2-ketoacid undergoes a metal-dependent reduction by NADPH to yield (R)-2,3-dihydroxy-isovalerate. The polypeptide is Ketol-acid reductoisomerase (NADP(+)) (Variovorax paradoxus (strain S110)).